Reading from the N-terminus, the 314-residue chain is METIRPLKFGTLSLPDRESRLVCRSILLDMLGEATIAPDEGDLTGVTGLFWKYVSLSLATVYFPRTMLRVNASGMGDSGVVILRAMDSPLVIRHRRIKVEAARADVIFLPSDASSEITLPEGGRFDCAHLPAYALASKRDLLKPIMMQPLAAECLPLQLLTNYAGYLLRQEYQSEEHAGMMVAHFYDLLPVLAQDIGNVSPRETPHNRMASIKMRVEQNLANGSFSITDVAEAERITPRAIQKFFSREGTTFSRYVLGRRLSLAKSLILAEGEATSISQIAYNVGFNDLSYFNRTFRSRYGVRPSDLRRLAAAA.

The HTH araC/xylS-type domain maps to 210 to 310; the sequence is ASIKMRVEQN…GVRPSDLRRL (101 aa). 2 consecutive DNA-binding regions (H-T-H motif) follow at residues 228-249 and 277-300; these read TDVA…SREG and ISQI…RSRY.

Transcriptional activator of the rhizobactin regulon. This is Transcriptional activator RhrA (rhrA) from Rhizobium meliloti (strain 1021) (Ensifer meliloti).